A 330-amino-acid polypeptide reads, in one-letter code: Aspartate--ammonia ligase (330 aa).

Belongs to the class-II aminoacyl-tRNA synthetase family. AsnA subfamily.

It localises to the cytoplasm. It carries out the reaction L-aspartate + NH4(+) + ATP = L-asparagine + AMP + diphosphate + H(+). It participates in amino-acid biosynthesis; L-asparagine biosynthesis; L-asparagine from L-aspartate (ammonia route): step 1/1. The protein is Aspartate--ammonia ligase of Escherichia coli O8 (strain IAI1).